A 383-amino-acid chain; its full sequence is Acetylornithine deacetylase (383 aa).

H80 serves as a coordination point for Zn(2+). The active site involves D82. D112 lines the Zn(2+) pocket. E144 is an active-site residue. Residues E145, E169, and H355 each coordinate Zn(2+).

Belongs to the peptidase M20A family. ArgE subfamily. In terms of assembly, homodimer. Requires Zn(2+) as cofactor. It depends on Co(2+) as a cofactor. Glutathione is required as a cofactor.

The protein localises to the cytoplasm. It carries out the reaction N(2)-acetyl-L-ornithine + H2O = L-ornithine + acetate. It participates in amino-acid biosynthesis; L-arginine biosynthesis; L-ornithine from N(2)-acetyl-L-ornithine (linear): step 1/1. Catalyzes the hydrolysis of the amide bond of N(2)-acetylated L-amino acids. Cleaves the acetyl group from N-acetyl-L-ornithine to form L-ornithine, an intermediate in L-arginine biosynthesis pathway, and a branchpoint in the synthesis of polyamines. The protein is Acetylornithine deacetylase of Salmonella agona (strain SL483).